A 132-amino-acid polypeptide reads, in one-letter code: Small ribosomal subunit protein uS9 (132 aa).

The disordered stretch occupies residues 104–132 (GYLTRDPRMKERKKYGLRKARRAPQFSKR). Over residues 113 to 132 (KERKKYGLRKARRAPQFSKR) the composition is skewed to basic residues.

The protein belongs to the universal ribosomal protein uS9 family.

The protein is Small ribosomal subunit protein uS9 of Natranaerobius thermophilus (strain ATCC BAA-1301 / DSM 18059 / JW/NM-WN-LF).